A 68-amino-acid polypeptide reads, in one-letter code: MSKLGALLIICLLLFPLTAVPMDGDQPADRPAERMQDDISFEQHPMFDATRRCCNAGFCRFGCTPCCY.

The N-terminal stretch at 1-19 is a signal peptide; sequence MSKLGALLIICLLLFPLTA. The propeptide occupies 20–50; it reads VPMDGDQPADRPAERMQDDISFEQHPMFDAT. Disulfide bonds link Cys53–Cys67, Cys54–Cys63, and Cys59–Cys66. Position 65 is a 4-hydroxyproline; partial (Pro65).

Contains 3 disulfide bonds. Expressed by the venom duct. Both hydroxylated and non-hydroxylated forms are mostly and only present in part 2 (proximal of the venom bulb) of the venom duct, respectively.

The protein localises to the secreted. The protein is TxMMSK-03 of Conus textile (Cloth-of-gold cone).